A 403-amino-acid chain; its full sequence is TPR repeat-containing protein Synpcc7942_0270 (403 aa).

5 TPR repeats span residues 208-243, 244-282, 283-316, 317-350, and 351-387; these read AYLC…PEPA, VRYE…AIHK, LGAW…APQA, TVAL…DPND, and PSLY…QGSP.

The polypeptide is TPR repeat-containing protein Synpcc7942_0270 (Synechococcus elongatus (strain ATCC 33912 / PCC 7942 / FACHB-805) (Anacystis nidulans R2)).